Reading from the N-terminus, the 191-residue chain is Threonylcarbamoyl-AMP synthase (191 aa).

The 185-residue stretch at 7-191 (QSELNDALKI…FHASTGKRLR (185 aa)) folds into the YrdC-like domain.

This sequence belongs to the SUA5 family. TsaC subfamily.

It is found in the cytoplasm. It carries out the reaction L-threonine + hydrogencarbonate + ATP = L-threonylcarbamoyladenylate + diphosphate + H2O. Required for the formation of a threonylcarbamoyl group on adenosine at position 37 (t(6)A37) in tRNAs that read codons beginning with adenine. Catalyzes the conversion of L-threonine, HCO(3)(-)/CO(2) and ATP to give threonylcarbamoyl-AMP (TC-AMP) as the acyladenylate intermediate, with the release of diphosphate. This Psychromonas ingrahamii (strain DSM 17664 / CCUG 51855 / 37) protein is Threonylcarbamoyl-AMP synthase.